A 146-amino-acid chain; its full sequence is 3-dehydroquinate dehydratase (146 aa).

Tyr22 acts as the Proton acceptor in catalysis. The substrate site is built by Asn73, His79, and Asp86. His101 (proton donor) is an active-site residue. Substrate contacts are provided by residues 102–103 (IS) and Arg112.

The protein belongs to the type-II 3-dehydroquinase family. As to quaternary structure, homododecamer.

The enzyme catalyses 3-dehydroquinate = 3-dehydroshikimate + H2O. It participates in metabolic intermediate biosynthesis; chorismate biosynthesis; chorismate from D-erythrose 4-phosphate and phosphoenolpyruvate: step 3/7. Functionally, catalyzes a trans-dehydration via an enolate intermediate. The sequence is that of 3-dehydroquinate dehydratase (aroQ) from Corynebacterium pseudotuberculosis (strain C231).